Here is a 118-residue protein sequence, read N- to C-terminus: Peptidyl-tRNA hydrolase (118 aa).

This sequence belongs to the PTH2 family.

It is found in the cytoplasm. The enzyme catalyses an N-acyl-L-alpha-aminoacyl-tRNA + H2O = an N-acyl-L-amino acid + a tRNA + H(+). In terms of biological role, the natural substrate for this enzyme may be peptidyl-tRNAs which drop off the ribosome during protein synthesis. This chain is Peptidyl-tRNA hydrolase, found in Thermococcus onnurineus (strain NA1).